Consider the following 168-residue polypeptide: Protein-export protein SecB (168 aa).

This sequence belongs to the SecB family. As to quaternary structure, homotetramer, a dimer of dimers. One homotetramer interacts with 1 SecA dimer.

The protein localises to the cytoplasm. Functionally, one of the proteins required for the normal export of preproteins out of the cell cytoplasm. It is a molecular chaperone that binds to a subset of precursor proteins, maintaining them in a translocation-competent state. It also specifically binds to its receptor SecA. The protein is Protein-export protein SecB of Haemophilus influenzae (strain PittGG).